A 318-amino-acid polypeptide reads, in one-letter code: Protein-methionine-sulfoxide reductase catalytic subunit MsrP (318 aa).

The tat-type signal signal peptide spans 1-40; the sequence is MNRFTRYDVTPEVIFNQRRQIIKAMGLGAAALSLPNIGFA. Residues asparagine 72, 75–76, cysteine 130, threonine 165, asparagine 217, arginine 222, and 233–235 each bind Mo-molybdopterin; these read YE and SIK.

Belongs to the MsrP family. As to quaternary structure, heterodimer of a catalytic subunit (MsrP) and a heme-binding subunit (MsrQ). Requires Mo-molybdopterin as cofactor. Predicted to be exported by the Tat system. The position of the signal peptide cleavage has not been experimentally proven.

It localises to the periplasm. It carries out the reaction L-methionyl-[protein] + a quinone + H2O = L-methionyl-(S)-S-oxide-[protein] + a quinol. The enzyme catalyses L-methionyl-[protein] + a quinone + H2O = L-methionyl-(R)-S-oxide-[protein] + a quinol. Part of the MsrPQ system that repairs oxidized periplasmic proteins containing methionine sulfoxide residues (Met-O), using respiratory chain electrons. Thus protects these proteins from oxidative-stress damage caused by reactive species of oxygen and chlorine generated by the host defense mechanisms. MsrPQ is essential for the maintenance of envelope integrity under bleach stress, rescuing a wide series of structurally unrelated periplasmic proteins from methionine oxidation. The catalytic subunit MsrP is non-stereospecific, being able to reduce both (R-) and (S-) diastereoisomers of methionine sulfoxide. This Actinobacillus pleuropneumoniae serotype 3 (strain JL03) protein is Protein-methionine-sulfoxide reductase catalytic subunit MsrP.